The primary structure comprises 232 residues: Ribosome maturation protein SDO1 homolog (232 aa).

The protein belongs to the SDO1/SBDS family.

This is Ribosome maturation protein SDO1 homolog from Methanothermobacter thermautotrophicus (strain ATCC 29096 / DSM 1053 / JCM 10044 / NBRC 100330 / Delta H) (Methanobacterium thermoautotrophicum).